Reading from the N-terminus, the 335-residue chain is Ribosomal RNA large subunit methyltransferase F (335 aa).

Belongs to the methyltransferase superfamily. METTL16/RlmF family.

The protein resides in the cytoplasm. It catalyses the reaction adenosine(1618) in 23S rRNA + S-adenosyl-L-methionine = N(6)-methyladenosine(1618) in 23S rRNA + S-adenosyl-L-homocysteine + H(+). Specifically methylates the adenine in position 1618 of 23S rRNA. The chain is Ribosomal RNA large subunit methyltransferase F from Yersinia enterocolitica serotype O:8 / biotype 1B (strain NCTC 13174 / 8081).